Consider the following 105-residue polypeptide: Large ribosomal subunit protein uL24 (105 aa).

Belongs to the universal ribosomal protein uL24 family. As to quaternary structure, part of the 50S ribosomal subunit.

One of two assembly initiator proteins, it binds directly to the 5'-end of the 23S rRNA, where it nucleates assembly of the 50S subunit. Functionally, one of the proteins that surrounds the polypeptide exit tunnel on the outside of the subunit. The polypeptide is Large ribosomal subunit protein uL24 (Clostridium botulinum (strain 657 / Type Ba4)).